The sequence spans 330 residues: tRNA (guanine(37)-N(1))-methyltransferase Trm5b (330 aa).

S-adenosyl-L-methionine is bound by residues R173, 211–212 (DI), 238–239 (DS), and N252.

Belongs to the class I-like SAM-binding methyltransferase superfamily. TRM5/TYW2 family.

It is found in the cytoplasm. It carries out the reaction guanosine(37) in tRNA + S-adenosyl-L-methionine = N(1)-methylguanosine(37) in tRNA + S-adenosyl-L-homocysteine + H(+). In terms of biological role, specifically methylates the N1 position of guanosine-37 in various tRNAs. The sequence is that of tRNA (guanine(37)-N(1))-methyltransferase Trm5b from Pyrococcus abyssi (strain GE5 / Orsay).